The primary structure comprises 172 residues: 18.6 kDa class III heat shock protein (172 aa).

The tract at residues 29-54 (RRSAGDHAHHAAHGHGQHRISGIGGG) is disordered. Residues 48–172 (ISGIGGGAPV…KTKSVQVTIA (125 aa)) enclose the sHSP domain.

This sequence belongs to the small heat shock protein (HSP20) family. May form oligomeric structures.

It localises to the cytoplasm. This chain is 18.6 kDa class III heat shock protein (HSP18.6), found in Oryza sativa subsp. japonica (Rice).